Consider the following 503-residue polypeptide: Xylan O-acetyltransferase 12 (503 aa).

Topologically, residues Met1–Pro54 are cytoplasmic. Residues Leu55 to Leu77 form a helical; Signal-anchor for type II membrane protein membrane-spanning segment. The Lumenal portion of the chain corresponds to Phe78–Lys503. 4 disulfide bridges follow: Cys153–Cys204, Cys175–Cys240, Cys184–Cys484, and Cys400–Cys480. 4 N-linked (GlcNAc...) asparagine glycosylation sites follow: Asn154, Asn164, Asn190, and Asn210. A GDS motif motif is present at residues Gly227 to Ser229. The active-site Nucleophile is Ser229. N-linked (GlcNAc...) asparagine glycosylation is found at Asn256, Asn268, Asn373, Asn402, and Asn443. The active-site Proton donor is Asp479. Residues Asp479–His482 carry the DXXH motif motif. His482 functions as the Proton acceptor in the catalytic mechanism.

The protein belongs to the PC-esterase family. TBL subfamily.

Its subcellular location is the golgi apparatus membrane. Its function is as follows. Xylan acetyltransferase required for 2-O- and 3-O-monoacetylation of xylosyl residues in xylan. Catalyzes the 2-O-acetylation of xylan, followed by nonenzymatic acetyl migration to the O-3 position, resulting in products that are monoacetylated at both O-2 and O-3 positions. In Oryza sativa subsp. japonica (Rice), this protein is Xylan O-acetyltransferase 12.